The following is a 408-amino-acid chain: MDFGVLPPEINSGRMYAGPGSGPMMAAAAAWDSLAAELGLAAGGYRLAISELTGAYWAGPAAASMVAAVTPYVAWLSATAGQAEQAGMQARAAAAAYELAFAMTVPPPVVVANRALLVALVATNFFGQNTPAIAATEAQYAEMWAQDAAAMYAYAGSAAIATELTPFTAAPVTTSPAALAGQAAATVSSTVPPLATTAAVPQLLQQLSSTSLIPWYSALQQWLAENLLGLTPDNRMTIVRLLGISYFDEGLLQFEASLAQQAIPGTPGGAGDSGSSVLDSWGPTIFAGPRASPSVAGGGAVGGVQTPQPYWYWALDRESIGGSVSAALGKGSSAGSLSVPPDWAARARWANPAAWRLPGDDVTALRGTAENALLRGFPMASAGQSTGGGFVHKYGFRLAVMQRPPFAG.

Residues 56-76 (YWAGPAAASMVAAVTPYVAWL) form a helical membrane-spanning segment.

It belongs to the mycobacterial PPE family.

The protein resides in the cell membrane. This is an uncharacterized protein from Mycobacterium bovis (strain ATCC BAA-935 / AF2122/97).